Here is a 554-residue protein sequence, read N- to C-terminus: Propanediol dehydratase large subunit (554 aa).

This sequence belongs to the diol/glycerol dehydratase large subunit family. In terms of assembly, the propanediol dehydratase enzyme is a heterotrimeric complex composed of a large (PduC), a medium (PduD) and a small (PduE) subunit. Adenosylcob(III)alamin serves as cofactor.

The protein resides in the bacterial microcompartment. The enzyme catalyses propane-1,2-diol = propanal + H2O. It functions in the pathway polyol metabolism; 1,2-propanediol degradation. Inhibited by glycerol. In terms of biological role, part of the PduCDE complex that catalyzes the dehydration of 1,2-propanediol (1,2-PD) to propionaldehyde. Required for S.typhimurium growth on 1,2-PD as the sole carbon and energy source. This subunit is directly targeted to the BMC. Functionally, the 1,2-PD-specific bacterial microcompartment (BMC) concentrates low levels of 1,2-PD catabolic enzymes, concentrates volatile reaction intermediates thus enhancing pathway flux and keeps the level of toxic, mutagenic propionaldehyde low. In Salmonella typhimurium (strain LT2 / SGSC1412 / ATCC 700720), this protein is Propanediol dehydratase large subunit.